The primary structure comprises 38 residues: Mu-hexatoxin-Mg1b (38 aa).

Disulfide bonds link Cys1–Cys15, Cys8–Cys20, and Cys14–Cys34. Ser38 is subject to Serine amide.

This sequence belongs to the neurotoxin 14 (magi-1) family. 09 (magi-1) subfamily. Expressed by the venom gland.

It localises to the secreted. Insecticidal neurotoxin. Shows competition for site 3 of insect voltage-gated sodium channels (Nav). This Macrothele gigas (Japanese funnel web spider) protein is Mu-hexatoxin-Mg1b.